The chain runs to 547 residues: Cytochrome P450 monooxygenase oblB (547 aa).

2 consecutive transmembrane segments (helical) span residues 42 to 62 and 242 to 262; these read GAVG…RLFL and FDMF…PWLI. The N-linked (GlcNAc...) asparagine glycan is linked to asparagine 277. A helical transmembrane segment spans residues 345-365; the sequence is VLIGSGTMTTAGTMGFLCYYI. Residue cysteine 489 coordinates heme.

This sequence belongs to the cytochrome P450 family. The cofactor is heme.

It is found in the membrane. It catalyses the reaction ophiobolin F + 4 reduced [NADPH--hemoprotein reductase] + 4 O2 = ophiobolin C + 4 oxidized [NADPH--hemoprotein reductase] + 6 H2O + 4 H(+). The protein operates within secondary metabolite biosynthesis; terpenoid biosynthesis. In terms of biological role, cytochrome P450 monooxygenase; part of the gene cluster that mediates the biosynthesis of the sesterterpenes ophiobolins, fungal phytotoxins with potential anti-cancer activities. The first step of the pathway is performed by the sesterterpene synthase oblA that possesses both prenyl transferase and terpene cyclase activity, converting isopentenyl diphosphate and dimethylallyl diphosphate into geranylfarnesyl diphosphate (GFPP) and further converting GFPP into ophiobolin F, respectively. Other sesterterpenoids (C(25) terpenoids) are found as minor products of oblA. The cytochrome P450 monooxygenase oblB then catalyzes a four-step oxidative transformation of ophiobolin F to yield ophiobolin C. The function of the cytochrome P450 monooxygenase oblE has still to be determined. This is Cytochrome P450 monooxygenase oblB from Emericella variicolor (Aspergillus stellatus).